Consider the following 530-residue polypeptide: Glucose-6-phosphate isomerase (530 aa).

Glu356 (proton donor) is an active-site residue. Catalysis depends on residues His387 and Lys502.

It belongs to the GPI family.

It localises to the cytoplasm. It catalyses the reaction alpha-D-glucose 6-phosphate = beta-D-fructose 6-phosphate. It functions in the pathway carbohydrate biosynthesis; gluconeogenesis. Its pathway is carbohydrate degradation; glycolysis; D-glyceraldehyde 3-phosphate and glycerone phosphate from D-glucose: step 2/4. Its function is as follows. Catalyzes the reversible isomerization of glucose-6-phosphate to fructose-6-phosphate. This is Glucose-6-phosphate isomerase from Borreliella burgdorferi (strain ATCC 35210 / DSM 4680 / CIP 102532 / B31) (Borrelia burgdorferi).